The sequence spans 173 residues: bZIP transcription factor 44 (173 aa).

The disordered stretch occupies residues 1–65; that stretch reads MNNKTEMGSS…SRMRKQKHLD (65 aa). Low complexity predominate over residues 8-22; it reads GSSTSGNCSSVSTTG. Positions 30-41 are enriched in basic and acidic residues; the sequence is SDLRQRDLIDER. Positions 39–102 constitute a bZIP domain; it reads DERKRKRKQS…VTIEAENDIL (64 aa). The segment at 41–62 is basic motif; the sequence is RKRKRKQSNRESARRSRMRKQK. A leucine-zipper region spans residues 67–81; it reads LTAQVTHLRKENAQI.

As to quaternary structure, forms heterodimers with BZIP1, BZIP9, BZIP10, BZIP25 and BZIP63. As to expression, expressed in the micropylar endosperm and radicle tip in early germinating seeds.

The protein resides in the nucleus. In terms of biological role, transcription factor that binds to the DNA G-box motif 5'-CACGTG-3' of MAN7 promoter. Involved in the positive regulation of seed germination through MAN7 gene activation. MAN7 is required for both, loosening of the micropylar endosperm, and rupture of the seed coat in germinating seeds. The protein is bZIP transcription factor 44 of Arabidopsis thaliana (Mouse-ear cress).